The chain runs to 426 residues: Putative phosphate permease TC_0064 (426 aa).

Helical transmembrane passes span 1–21 (MWWL…NIGA), 37–57 (LTLR…AVVL), 83–103 (VFGM…ASFF), 104–124 (GWPV…GIIL), 140–160 (VSWL…FSFI), 183–203 (AIII…ARVV), 207–227 (VAFR…IWGV), 260–280 (LVVE…MSFA), 309–329 (VLFI…ATWG), 365–385 (FGFP…VGLA), and 399–419 (IVLS…MFFL).

The protein belongs to the inorganic phosphate transporter (PiT) (TC 2.A.20) family.

It is found in the cell membrane. Functionally, potential transporter for phosphate. This Chlamydia muridarum (strain MoPn / Nigg) protein is Putative phosphate permease TC_0064.